We begin with the raw amino-acid sequence, 122 residues long: Interferon alpha-inducible protein 27, mitochondrial (122 aa).

The transit peptide at 1–33 directs the protein to the mitochondrion; that stretch reads MEASALTSSAVTSVAKVVRVASGSAVVLPLARI. A helical transmembrane segment spans residues 34 to 57; sequence ATVVIGGVVAMAAVPMVLSAMGFT. Lys69 is covalently cross-linked (Glycyl lysine isopeptide (Lys-Gly) (interchain with G-Cter in ubiquitin)). Helical transmembrane passes span 71-91 and 99-119; these read MSAA…VATL and LSGL…AVIA. The mediates interaction with SKP2 and hepatitis C virus non-structural protein NS5A stretch occupies residues 76 to 122; sequence IANGGGVASGSLVATLQSLGATGLSGLTKFILGSIGSAIAAVIARFY. The tract at residues 103 to 112 is required for hepatitis C virus non-structural protein NS5A degradation; that stretch reads TKFILGSIGS.

The protein belongs to the IFI6/IFI27 family. As to quaternary structure, homodimer. Interacts with hepatitis C virus/HCV non-structural protein NS5A; promotes the ubiquitin-mediated proteasomal degradation of NS5A. Interacts with SKP2; promotes the ubiquitin-mediated proteasomal degradation of NS5A. Interacts with NR4A1. May interact with BCL2. Post-translationally, ubiquitinated by TRIM21 via 'Lys-6'-linked ubiquitin chains leading to IFI27 mitochondrial migration.

It is found in the mitochondrion membrane. It localises to the nucleus inner membrane. The protein localises to the endoplasmic reticulum membrane. Functionally, probable adapter protein involved in different biological processes. Part of the signaling pathways that lead to apoptosis. Involved in type-I interferon-induced apoptosis characterized by a rapid and robust release of cytochrome C from the mitochondria and activation of BAX and caspases 2, 3, 6, 8 and 9. Also functions in TNFSF10-induced apoptosis. May also have a function in the nucleus, where it may be involved in the interferon-induced negative regulation of the transcriptional activity of NR4A1, NR4A2 and NR4A3 through the enhancement of XPO1-mediated nuclear export of these nuclear receptors. May thereby play a role in the vascular response to injury. In the innate immune response, has an antiviral activity towards hepatitis C virus/HCV. May prevent the replication of the virus by recruiting both the hepatitis C virus non-structural protein 5A/NS5A and the ubiquitination machinery via SKP2, promoting the ubiquitin-mediated proteasomal degradation of NS5A. Also promotes virus-induced pyroptosis by activating CASP3 in the mitochondria after 'Lys-6'-linked ubiquitination by TRIM21. The protein is Interferon alpha-inducible protein 27, mitochondrial of Homo sapiens (Human).